We begin with the raw amino-acid sequence, 701 residues long: Kinesin-like protein KIN-10C (701 aa).

The Kinesin motor domain maps to 8–318 (VVRVVARVKP…LNLASRICLG (311 aa)). An ATP-binding site is contributed by 94–101 (GARNSGKT).

This sequence belongs to the TRAFAC class myosin-kinesin ATPase superfamily. Kinesin family. KIN-10 subfamily.

The protein is Kinesin-like protein KIN-10C of Arabidopsis thaliana (Mouse-ear cress).